The chain runs to 103 residues: Large ribosomal subunit protein bL21 (103 aa).

This sequence belongs to the bacterial ribosomal protein bL21 family. Part of the 50S ribosomal subunit. Contacts protein L20.

Functionally, this protein binds to 23S rRNA in the presence of protein L20. This Colwellia psychrerythraea (strain 34H / ATCC BAA-681) (Vibrio psychroerythus) protein is Large ribosomal subunit protein bL21.